The following is a 152-amino-acid chain: Protein-export protein SecB (152 aa).

It belongs to the SecB family. Homotetramer, a dimer of dimers. One homotetramer interacts with 1 SecA dimer.

It is found in the cytoplasm. Its function is as follows. One of the proteins required for the normal export of preproteins out of the cell cytoplasm. It is a molecular chaperone that binds to a subset of precursor proteins, maintaining them in a translocation-competent state. It also specifically binds to its receptor SecA. The protein is Protein-export protein SecB of Thiobacillus denitrificans (strain ATCC 25259 / T1).